We begin with the raw amino-acid sequence, 702 residues long: Glucosidase 2 subunit beta (702 aa).

A signal peptide spans 1–20 (MVSMFSLFLLLIEQSPLVAS). N-linked (GlcNAc...) asparagine glycosylation is present at asparagine 145. Residues 163-228 (SYREGKEALE…LRGEYFNQLS (66 aa)) adopt a coiled-coil conformation. N-linked (GlcNAc...) asparagine glycosylation is found at asparagine 240 and asparagine 358. Residues 435–457 (PKVLPPDAVESEQDTNSDHIGTS) are disordered. Residues 478-517 (KDLVSLEKRFRSCESQVSLLENELKQKMDYKKLLDETEDE) are a coiled coil. 2 N-linked (GlcNAc...) asparagine glycosylation sites follow: asparagine 520 and asparagine 525. The region spanning 537–689 (SYCLDDILDN…DVVGPLGCNK (153 aa)) is the MRH domain. Disulfide bonds link cysteine 539-cysteine 552, cysteine 646-cysteine 675, and cysteine 660-cysteine 687. Asparagine 688 and asparagine 699 each carry an N-linked (GlcNAc...) asparagine glycan.

In terms of assembly, heterodimer of a catalytic subunit alpha (ROT2) and a subunit beta (GTB1).

It is found in the endoplasmic reticulum. Subunit of glucosidase 2, which cleaves sequentially the 2 innermost alpha-1,3-linked glucose residues from the Glc(2)Man(9)GlcNAc(2) oligosaccharide precursor of immature glycoproteins. Specifically required for the cleavage of the final glucose. The sequence is that of Glucosidase 2 subunit beta (GTB1) from Saccharomyces cerevisiae (strain ATCC 204508 / S288c) (Baker's yeast).